Here is a 906-residue protein sequence, read N- to C-terminus: Catenin alpha-2 (906 aa).

The span at 866–880 (KKPLVKREKPEEYQT) shows a compositional bias: basic and acidic residues. Residues 866–892 (KKPLVKREKPEEYQTRVRRGSQKKHIS) are disordered. The span at 881-891 (RVRRGSQKKHI) shows a compositional bias: basic residues.

Belongs to the vinculin/alpha-catenin family. Interacts with CDH1 and CDH2. As to expression, mainly in the nervous system (at protein level).

It is found in the cell membrane. The protein resides in the cytoplasm. Its subcellular location is the cytoskeleton. The protein localises to the cell junction. It localises to the adherens junction. It is found in the cell projection. The protein resides in the axon. Its subcellular location is the nucleus. In terms of biological role, may function as a linker between cadherin adhesion receptors and the cytoskeleton to regulate cell-cell adhesion and differentiation in the nervous system. This Gallus gallus (Chicken) protein is Catenin alpha-2 (CTNNA2).